Consider the following 168-residue polypeptide: MSKLQILEFPDPRLRTVAKPVQTFDAALGQLIDDMFETMYEAPGIGLAATQVDVHKRIVVIDVSEDKSEPMVFINPDIEVLDGDPEEMQEGCLSVPGFYESVTRIPHVKIRAQDRNGESYEMEARGLLAVCLQHEVDHLNGKLYVDYLSNVKRTRIRKKLEKQHKMRA.

The Fe cation site is built by C92 and H134. E135 is an active-site residue. H138 is a Fe cation binding site.

This sequence belongs to the polypeptide deformylase family. It depends on Fe(2+) as a cofactor.

It catalyses the reaction N-terminal N-formyl-L-methionyl-[peptide] + H2O = N-terminal L-methionyl-[peptide] + formate. Removes the formyl group from the N-terminal Met of newly synthesized proteins. Requires at least a dipeptide for an efficient rate of reaction. N-terminal L-methionine is a prerequisite for activity but the enzyme has broad specificity at other positions. This Hahella chejuensis (strain KCTC 2396) protein is Peptide deformylase.